A 636-amino-acid polypeptide reads, in one-letter code: Plasma kallikrein (636 aa).

The signal sequence occupies residues 1 to 19; sequence MIALRQAAYFICLFATVSC. Apple domains are found at residues 21 to 104, 111 to 194, 201 to 284, and 294 to 377; these read CLTQ…LKRC, CHRS…LKAC, CRVD…LLTC, and CHSK…LRLC. 12 disulfides stabilise this stretch: cysteine 21-cysteine 104, cysteine 47-cysteine 77, cysteine 51-cysteine 57, cysteine 111-cysteine 194, cysteine 137-cysteine 166, cysteine 141-cysteine 147, cysteine 201-cysteine 284, cysteine 227-cysteine 256, cysteine 231-cysteine 237, cysteine 294-cysteine 377, cysteine 320-cysteine 349, and cysteine 324-cysteine 330. Residues asparagine 66 and asparagine 127 are each glycosylated (N-linked (GlcNAc...) asparagine). Residues asparagine 361 and asparagine 397 are each glycosylated (N-linked (GlcNAc...) asparagine). Residues 392 to 627 enclose the Peptidase S1 domain; sequence IVGGTNASWG…YVDWILEKTQ (236 aa). A disulfide bridge connects residues cysteine 420 and cysteine 436. The Charge relay system role is filled by histidine 435. N-linked (GlcNAc...) asparagine glycosylation is present at asparagine 454. The active-site Charge relay system is aspartate 484. Asparagine 495 is a glycosylation site (N-linked (GlcNAc...) asparagine). Cystine bridges form between cysteine 518/cysteine 585, cysteine 549/cysteine 564, and cysteine 575/cysteine 603. Residue serine 579 is the Charge relay system of the active site.

This sequence belongs to the peptidase S1 family. Plasma kallikrein subfamily. Forms a heterodimer with SERPINA5. The zymogen is activated by factor XIIa, which cleaves the molecule into a light chain, which contains the active site, and a heavy chain, which associates with HMW kininogen. These chains are linked by one or more disulfide bonds.

The protein resides in the secreted. It carries out the reaction Cleaves selectively Arg-|-Xaa and Lys-|-Xaa bonds, including Lys-|-Arg and Arg-|-Ser bonds in (human) kininogen to release bradykinin.. Inhibited by SERPINA5. In terms of biological role, the enzyme cleaves Lys-Arg and Arg-Ser bonds. It activates, in a reciprocal reaction, factor XII after its binding to a negatively charged surface. It also releases bradykinin from HMW kininogen and may also play a role in the renin-angiotensin system by converting prorenin into renin. The chain is Plasma kallikrein (KLKB1) from Bos taurus (Bovine).